Reading from the N-terminus, the 110-residue chain is MANDARPLARLANCRVGDQSSATHAYTVGPVLGVPPTGGVDLRYGGRAGIGRSETVTDHGAVGRRYHQPCAGQIRLSELRVTILLRCETLCETAQLLRCPPLPCDCSTPL.

Its function is as follows. May play a regulatory role in sulfomenaquinone (SMK) biosynthesis. This is an uncharacterized protein from Mycobacterium bovis (strain ATCC BAA-935 / AF2122/97).